The sequence spans 357 residues: Phosphoribosylformylglycinamidine cyclo-ligase (357 aa).

It belongs to the AIR synthase family.

The protein localises to the cytoplasm. It catalyses the reaction 2-formamido-N(1)-(5-O-phospho-beta-D-ribosyl)acetamidine + ATP = 5-amino-1-(5-phospho-beta-D-ribosyl)imidazole + ADP + phosphate + H(+). Its pathway is purine metabolism; IMP biosynthesis via de novo pathway; 5-amino-1-(5-phospho-D-ribosyl)imidazole from N(2)-formyl-N(1)-(5-phospho-D-ribosyl)glycinamide: step 2/2. This chain is Phosphoribosylformylglycinamidine cyclo-ligase, found in Agrobacterium fabrum (strain C58 / ATCC 33970) (Agrobacterium tumefaciens (strain C58)).